A 261-amino-acid polypeptide reads, in one-letter code: Thiazole synthase (261 aa).

Lys102 serves as the catalytic Schiff-base intermediate with DXP. 1-deoxy-D-xylulose 5-phosphate-binding positions include Gly163, 189–190, and 211–212; these read AG and NT.

It belongs to the ThiG family. As to quaternary structure, homotetramer. Forms heterodimers with either ThiH or ThiS.

Its subcellular location is the cytoplasm. The enzyme catalyses [ThiS sulfur-carrier protein]-C-terminal-Gly-aminoethanethioate + 2-iminoacetate + 1-deoxy-D-xylulose 5-phosphate = [ThiS sulfur-carrier protein]-C-terminal Gly-Gly + 2-[(2R,5Z)-2-carboxy-4-methylthiazol-5(2H)-ylidene]ethyl phosphate + 2 H2O + H(+). It functions in the pathway cofactor biosynthesis; thiamine diphosphate biosynthesis. Functionally, catalyzes the rearrangement of 1-deoxy-D-xylulose 5-phosphate (DXP) to produce the thiazole phosphate moiety of thiamine. Sulfur is provided by the thiocarboxylate moiety of the carrier protein ThiS. In vitro, sulfur can be provided by H(2)S. This chain is Thiazole synthase, found in Acinetobacter baumannii (strain SDF).